We begin with the raw amino-acid sequence, 863 residues long: Receptor-like protein 9DC1 (863 aa).

The first 21 residues, M1 to S21, serve as a signal peptide directing secretion. The Extracellular portion of the chain corresponds to S22–Q812. The segment at L24–Q90 is N-cap. Residues N71 and N108 are each glycosylated (N-linked (GlcNAc...) asparagine). The stretch at V91–L114 is one LRR 1; degenerate repeat. LRR repeat units lie at residues S115–E138 and S140–L163. The LRR 4; degenerate repeat unit spans residues S164–N190. 3 N-linked (GlcNAc...) asparagine glycosylation sites follow: N190, N203, and N211. LRR repeat units lie at residues L191 to S213, S214 to L237, L240 to S262, A264 to H286, L287 to L311, and T312 to K336. N261 is a glycosylation site (N-linked (GlcNAc...) asparagine). N-linked (GlcNAc...) asparagine glycosylation is found at N299 and N310. An LRR 11; degenerate repeat occupies L337–F357. LRR repeat units follow at residues N358–L382, Q383–L406, S408–S428, K429–Q452, N454–L476, K477–R500, E502–V524, G525–C549, Y551–Y572, L573–N597, F599–N623, L667–D690, L691–N714, L715–L739, and F741–G759. 3 N-linked (GlcNAc...) asparagine glycosylation sites follow: N378, N396, and N416. N464 carries an N-linked (GlcNAc...) asparagine glycan. Residue N519 is glycosylated (N-linked (GlcNAc...) asparagine). N563 carries an N-linked (GlcNAc...) asparagine glycan. N-linked (GlcNAc...) asparagine glycosylation is found at N674, N698, and N714. N-linked (GlcNAc...) asparagine glycans are attached at residues N746 and N767. The interval K760–Q812 is C-cap/acidic domain. The helical transmembrane segment at G813–W833 threads the bilayer. Residues S834–Y863 lie on the Cytoplasmic side of the membrane.

This sequence belongs to the RLP family.

Its subcellular location is the cell membrane. In terms of biological role, involved in plant defense. Confers resistance to the fungal pathogen C.fulvum through recognition of the AVR9 elicitor protein. The chain is Receptor-like protein 9DC1 from Solanum pimpinellifolium (Currant tomato).